A 194-amino-acid chain; its full sequence is Thymidine kinase (194 aa).

ATP contacts are provided by residues 15-22 (GSMFSGKS) and 88-91 (DEVQ). Residue Glu-89 is the Proton acceptor of the active site. Zn(2+) is bound by residues Cys-145, Cys-148, Cys-183, and His-186.

The protein belongs to the thymidine kinase family. As to quaternary structure, homotetramer.

The protein resides in the cytoplasm. The catalysed reaction is thymidine + ATP = dTMP + ADP + H(+). The chain is Thymidine kinase from Bacillus velezensis (strain DSM 23117 / BGSC 10A6 / LMG 26770 / FZB42) (Bacillus amyloliquefaciens subsp. plantarum).